We begin with the raw amino-acid sequence, 90 residues long: uncharacterized protein (90 aa).

Lysine 88 participates in a covalent cross-link: Isoglutamyl lysine isopeptide (Lys-Gln) (interchain with Q-Cter in protein Pup).

This is an uncharacterized protein from Mycolicibacterium smegmatis (strain ATCC 700084 / mc(2)155) (Mycobacterium smegmatis).